We begin with the raw amino-acid sequence, 540 residues long: 2,3-bisphosphoglycerate-independent phosphoglycerate mutase (540 aa).

The Mn(2+) site is built by Asp25 and Ser75. The active-site Phosphoserine intermediate is Ser75. Substrate-binding positions include His136, 166-167 (RD), Arg198, Arg204, 269-272 (RPDR), and Lys342. Mn(2+) contacts are provided by Asp409, His413, Asp450, His451, and His468.

This sequence belongs to the BPG-independent phosphoglycerate mutase family. As to quaternary structure, monomer. It depends on Mn(2+) as a cofactor.

It catalyses the reaction (2R)-2-phosphoglycerate = (2R)-3-phosphoglycerate. The protein operates within carbohydrate degradation; glycolysis; pyruvate from D-glyceraldehyde 3-phosphate: step 3/5. Its function is as follows. Catalyzes the interconversion of 2-phosphoglycerate and 3-phosphoglycerate. The protein is 2,3-bisphosphoglycerate-independent phosphoglycerate mutase of Prochlorococcus marinus subsp. pastoris (strain CCMP1986 / NIES-2087 / MED4).